Here is a 220-residue protein sequence, read N- to C-terminus: Probable glutathione S-transferase parA (220 aa).

The GST N-terminal domain maps to 4–83; sequence NNVVLLDFWP…YIDEVWHDKC (80 aa). Glutathione contacts are provided by residues serine 14, lysine 41, isoleucine 55, and 67–68; that span reads ES. The GST C-terminal domain maps to 89-209; sequence DPYERSQARF…LPHPHKIYGF (121 aa).

The protein belongs to the GST superfamily. HSP26 family.

The enzyme catalyses RX + glutathione = an S-substituted glutathione + a halide anion + H(+). This is Probable glutathione S-transferase parA (PARA) from Nicotiana tabacum (Common tobacco).